The chain runs to 280 residues: UBX domain-containing protein 10 (280 aa).

Positions 41–94 (SAKGRTRPSLQKSQGVEVCAHHIPSPPPAIPYELPSSQKPGACAPKSPNQGASD) are disordered. A Phosphoserine modification is found at S87. Residues 194-271 (DQEPRLLLAV…RIPHKSVLGI (78 aa)) form the UBX domain.

The protein belongs to the UBXN10 family. In terms of assembly, interacts with CLUAP1; the interaction is direct and mediates interaction with the intraflagellar transport complex B (IFT-B). Interacts with VCP; the interaction is direct.

The protein localises to the cell projection. It localises to the cilium. VCP/p97-binding protein required for ciliogenesis. Acts as a tethering factor that facilitates recruitment of VCP/p97 to the intraflagellar transport complex B (IFT-B) in cilia. UBX domain-containing proteins act as tethering factors for VCP/p97 and may specify substrate specificity of VCP/p97. The protein is UBX domain-containing protein 10 of Homo sapiens (Human).